The following is a 710-amino-acid chain: Amyloid beta precursor protein binding family B member 1 (710 aa).

Polar residues predominate over residues Met-1–Asn-15. 4 disordered regions span residues Met-1–Leu-24, Gly-131–Asp-254, Gly-276–Gln-299, and Thr-340–Pro-365. Residues Gly-145–Leu-173 are compositionally biased toward acidic residues. Residue Lys-204 is modified to N6-acetyllysine. The span at Ser-223–Tyr-234 shows a compositional bias: polar residues. Residues Ser-253 to Arg-285 form the WW domain. A compositionally biased stretch (low complexity) spans Ser-287–Gln-299. The region spanning Phe-370–Ala-509 is the PID 1 domain. Ser-459 carries the post-translational modification Phosphoserine; by PKC. Ser-517 is subject to Phosphoserine. The PID 2 domain maps to Lys-542–Ser-699. Residue Tyr-547 is modified to Phosphotyrosine; by ABL1. The residue at position 610 (Ser-610) is a Phosphoserine; by SGK1. An N6-acetyllysine modification is found at Lys-701.

As to quaternary structure, component of a complex, at least composed of APBB1, RASD1/DEXRAS1 and APP. Interacts (via PID domain 2) with APP (with the intracellular domain of the amyloid-beta precursor protein). Interacts (via PID domain 2) with RASD1/DEXRAS1; impairs the transcription activation activity. Interacts (via PID domain 1) with KAT5/TIP60. Interacts (via the WW domain) with the proline-rich region of APBB1IP. Interacts with TSHZ1 and TSHZ2. Interacts (via the WW domain) with histone H2AX (when phosphorylated on 'Tyr-142') and the proline-rich region of ENAH. Interacts with MAPK8. Interacts (via PID domain 1) with TSHZ3 (via homeobox domain). Interacts with SET. Found in a trimeric complex with HDAC1 and TSHZ3; the interaction between HDAC1 and APBB1 is mediated by TSHZ3. Interacts (via WWW domain) with NEK6. Interacts (via WWW domain) with ABL1. Interacts with RNF157. Interacts with ARF6. In terms of processing, phosphorylation at Ser-610 by SGK1 promotes its localization to the nucleus. Phosphorylated following nuclear translocation. Phosphorylation at Tyr-547 by ABL1 enhances transcriptional activation activity and reduces the affinity for RASD1/DEXRAS1. Phosphorylated at Ser-459 by PKC upon insulin activation. Acetylation at Lys-204 and Lys-701 by KAT5 promotes its transcription activator activity. Post-translationally, polyubiquitination by RNF157 leads to degradation by the proteasome. Highly expressed in brain; strongly reduced in post-mortem elderly subjects with Alzheimer disease. In terms of tissue distribution, expressed preferentially in the brain.

It is found in the cell membrane. The protein localises to the cytoplasm. Its subcellular location is the nucleus. It localises to the cell projection. The protein resides in the growth cone. It is found in the nucleus speckle. Its function is as follows. Transcription coregulator that can have both coactivator and corepressor functions. Adapter protein that forms a transcriptionally active complex with the gamma-secretase-derived amyloid precursor protein (APP) intracellular domain. Plays a central role in the response to DNA damage by translocating to the nucleus and inducing apoptosis. May act by specifically recognizing and binding histone H2AX phosphorylated on 'Tyr-142' (H2AXY142ph) at double-strand breaks (DSBs), recruiting other pro-apoptosis factors such as MAPK8/JNK1. Required for histone H4 acetylation at double-strand breaks (DSBs). Its ability to specifically bind modified histones and chromatin modifying enzymes such as KAT5/TIP60, probably explains its transcription activation activity. Functions in association with TSHZ3, SET and HDAC factors as a transcriptional repressor, that inhibits the expression of CASP4. Associates with chromatin in a region surrounding the CASP4 transcriptional start site(s). Involved in hippocampal neurite branching and neuromuscular junction formation, as a result plays a role in spatial memory functioning. Plays a role in the maintenance of lens transparency. May play a role in muscle cell strength. Acts as a molecular adapter that functions in neurite outgrowth by activating the RAC1-ARF6 axis upon insulin treatment. The polypeptide is Amyloid beta precursor protein binding family B member 1 (Homo sapiens (Human)).